We begin with the raw amino-acid sequence, 143 residues long: 16 kDa calcium-binding protein (143 aa).

4 EF-hand domains span residues 2–37 (SEEK…VGVC), 41–71 (ADKI…LPPR), 73–108 (KCVA…SGMD), and 109–143 (IDQN…QTYK). Ca(2+) contacts are provided by aspartate 15, aspartate 17, asparagine 19, glutamate 26, aspartate 49, asparagine 51, aspartate 53, lysine 55, glutamate 60, aspartate 86, aspartate 88, serine 90, lysine 92, glutamate 97, aspartate 122, asparagine 124, aspartate 126, glutamate 128, and glutamate 133.

Found in eggs.

Calcium-binding protein. The sequence is that of 16 kDa calcium-binding protein from Schistosoma mansoni (Blood fluke).